The following is a 257-amino-acid chain: UPF0246 protein BAV2675 (257 aa).

It belongs to the UPF0246 family.

In Bordetella avium (strain 197N), this protein is UPF0246 protein BAV2675.